We begin with the raw amino-acid sequence, 343 residues long: UDP-3-O-acylglucosamine N-acyltransferase (343 aa).

Residue His-237 is the Proton acceptor of the active site.

The protein belongs to the transferase hexapeptide repeat family. LpxD subfamily. Homotrimer.

It catalyses the reaction a UDP-3-O-[(3R)-3-hydroxyacyl]-alpha-D-glucosamine + a (3R)-hydroxyacyl-[ACP] = a UDP-2-N,3-O-bis[(3R)-3-hydroxyacyl]-alpha-D-glucosamine + holo-[ACP] + H(+). Its pathway is bacterial outer membrane biogenesis; LPS lipid A biosynthesis. Its function is as follows. Catalyzes the N-acylation of UDP-3-O-acylglucosamine using 3-hydroxyacyl-ACP as the acyl donor. Is involved in the biosynthesis of lipid A, a phosphorylated glycolipid that anchors the lipopolysaccharide to the outer membrane of the cell. This is UDP-3-O-acylglucosamine N-acyltransferase from Synechococcus sp. (strain JA-3-3Ab) (Cyanobacteria bacterium Yellowstone A-Prime).